The chain runs to 194 residues: DPY30 domain-containing protein 2 (194 aa).

The disordered stretch occupies residues 126–172; the sequence is EAFEKEPLKQESLPGTSDMIPGMPQQSPSSEPSVSSQVDLNTGTPQE. Positions 149 to 163 are enriched in low complexity; that stretch reads PQQSPSSEPSVSSQV.

It belongs to the dpy-30 family.

The chain is DPY30 domain-containing protein 2 (DYDC2) from Bos taurus (Bovine).